Consider the following 98-residue polypeptide: Large ribosomal subunit protein uL23 (98 aa).

This sequence belongs to the universal ribosomal protein uL23 family. Part of the 50S ribosomal subunit. Contacts protein L29, and trigger factor when it is bound to the ribosome.

Its function is as follows. One of the early assembly proteins it binds 23S rRNA. One of the proteins that surrounds the polypeptide exit tunnel on the outside of the ribosome. Forms the main docking site for trigger factor binding to the ribosome. The polypeptide is Large ribosomal subunit protein uL23 (Sorangium cellulosum (strain So ce56) (Polyangium cellulosum (strain So ce56))).